The following is a 353-amino-acid chain: Holliday junction branch migration complex subunit RuvB (353 aa).

The large ATPase domain (RuvB-L) stretch occupies residues Ala4–Tyr186. Residues Ile25, Arg26, Gly67, Lys70, Thr71, Thr72, Glu133–Phe135, Arg176, Tyr186, and Arg223 each bind ATP. Mg(2+) is bound at residue Thr71. Residues Ser187–Asp257 form a small ATPAse domain (RuvB-S) region. Residues Glu260–Asp353 form a head domain (RuvB-H) region. DNA-binding residues include Arg296, Arg315, and Arg320.

This sequence belongs to the RuvB family. In terms of assembly, homohexamer. Forms an RuvA(8)-RuvB(12)-Holliday junction (HJ) complex. HJ DNA is sandwiched between 2 RuvA tetramers; dsDNA enters through RuvA and exits via RuvB. An RuvB hexamer assembles on each DNA strand where it exits the tetramer. Each RuvB hexamer is contacted by two RuvA subunits (via domain III) on 2 adjacent RuvB subunits; this complex drives branch migration. In the full resolvosome a probable DNA-RuvA(4)-RuvB(12)-RuvC(2) complex forms which resolves the HJ.

The protein localises to the cytoplasm. It catalyses the reaction ATP + H2O = ADP + phosphate + H(+). In terms of biological role, the RuvA-RuvB-RuvC complex processes Holliday junction (HJ) DNA during genetic recombination and DNA repair, while the RuvA-RuvB complex plays an important role in the rescue of blocked DNA replication forks via replication fork reversal (RFR). RuvA specifically binds to HJ cruciform DNA, conferring on it an open structure. The RuvB hexamer acts as an ATP-dependent pump, pulling dsDNA into and through the RuvAB complex. RuvB forms 2 homohexamers on either side of HJ DNA bound by 1 or 2 RuvA tetramers; 4 subunits per hexamer contact DNA at a time. Coordinated motions by a converter formed by DNA-disengaged RuvB subunits stimulates ATP hydrolysis and nucleotide exchange. Immobilization of the converter enables RuvB to convert the ATP-contained energy into a lever motion, pulling 2 nucleotides of DNA out of the RuvA tetramer per ATP hydrolyzed, thus driving DNA branch migration. The RuvB motors rotate together with the DNA substrate, which together with the progressing nucleotide cycle form the mechanistic basis for DNA recombination by continuous HJ branch migration. Branch migration allows RuvC to scan DNA until it finds its consensus sequence, where it cleaves and resolves cruciform DNA. This chain is Holliday junction branch migration complex subunit RuvB, found in Pseudomonas fluorescens (strain Pf0-1).